The following is a 650-amino-acid chain: Macrolide export ATP-binding/permease protein MacB (650 aa).

The 240-residue stretch at 9 to 248 (IELIDLERVF…RPLGRPPGGA (240 aa)) folds into the ABC transporter domain. 45 to 52 (GQSGSGKS) contacts ATP. The next 4 membrane-spanning stretches (helical) occupy residues 276–296 (ALTLLGVVIGVAAVVTMMAIG), 525–545 (LTLLLGAVALISLLVGGIGVM), 580–600 (AVAVCGVGGLAGVGLGLGAAL), and 615–635 (PPIVAFCCAFLTGLLFGYLPA).

Belongs to the ABC transporter superfamily. Macrolide exporter (TC 3.A.1.122) family. Homodimer.

The protein localises to the cell inner membrane. Its function is as follows. Non-canonical ABC transporter that contains transmembrane domains (TMD), which form a pore in the inner membrane, and an ATP-binding domain (NBD), which is responsible for energy generation. Confers resistance against macrolides. This is Macrolide export ATP-binding/permease protein MacB from Rhodospirillum rubrum (strain ATCC 11170 / ATH 1.1.1 / DSM 467 / LMG 4362 / NCIMB 8255 / S1).